Consider the following 273-residue polypeptide: Putative phosphoenolpyruvate synthase regulatory protein (273 aa).

ADP is bound at residue 153–160; sequence AVSRAGKT.

This sequence belongs to the pyruvate, phosphate/water dikinase regulatory protein family. PSRP subfamily.

The catalysed reaction is [pyruvate, water dikinase] + ADP = [pyruvate, water dikinase]-phosphate + AMP + H(+). The enzyme catalyses [pyruvate, water dikinase]-phosphate + phosphate + H(+) = [pyruvate, water dikinase] + diphosphate. In terms of biological role, bifunctional serine/threonine kinase and phosphorylase involved in the regulation of the phosphoenolpyruvate synthase (PEPS) by catalyzing its phosphorylation/dephosphorylation. This is Putative phosphoenolpyruvate synthase regulatory protein from Xylella fastidiosa (strain M23).